A 175-amino-acid chain; its full sequence is ATP synthase subunit b, chloroplastic (175 aa).

A helical membrane pass occupies residues 26–44; sequence VINLAVVIGVVVSFVGDAV.

Belongs to the ATPase B chain family. F-type ATPases have 2 components, F(1) - the catalytic core - and F(0) - the membrane proton channel. F(1) has five subunits: alpha(3), beta(3), gamma(1), delta(1), epsilon(1). F(0) has four main subunits: a(1), b(1), b'(1) and c(10-14). The alpha and beta chains form an alternating ring which encloses part of the gamma chain. F(1) is attached to F(0) by a central stalk formed by the gamma and epsilon chains, while a peripheral stalk is formed by the delta, b and b' chains.

It localises to the plastid. The protein resides in the chloroplast thylakoid membrane. F(1)F(0) ATP synthase produces ATP from ADP in the presence of a proton or sodium gradient. F-type ATPases consist of two structural domains, F(1) containing the extramembraneous catalytic core and F(0) containing the membrane proton channel, linked together by a central stalk and a peripheral stalk. During catalysis, ATP synthesis in the catalytic domain of F(1) is coupled via a rotary mechanism of the central stalk subunits to proton translocation. Functionally, component of the F(0) channel, it forms part of the peripheral stalk, linking F(1) to F(0). In Tupiella akineta (Green alga), this protein is ATP synthase subunit b, chloroplastic.